A 556-amino-acid polypeptide reads, in one-letter code: MLNLCHALRGVRQFSCSVIVKVKCASCSIKLQDQDPSKPGYYTKPKSLPDSKLNPDLQDLKYLLFSQDIQLSKQAIQNDPDLKTKRDLLLRVICKRCSNALHHNNYNPEEFPESTLNDILNYVPRGSNVMHIVPFVEFPLHLDPNVLKRNDLDTTLVLTKSDQVFKDKNAVSKKVPIFMKQFLKNTLRIDSNKTFAISALKNWNISMFYNYFKNYTYLLGNPNVGKSTLINTLLQKYLGYKVKIDSTGKINSPSEEVMQEAFTNPKNFFKIQAAGVSHIPNLTRSVQAYQVGGKILFDLPGYSTSTSRLRLEELIDERWLQRLRKTDLFNRKHIKQKTYESMKGTSQGGCYTVGGIFYLVPPKGSINQIVKYIPGPSKTFKNIEKGIDVFNSCNSSSGTHPLSRYCGIKSVICEKSQYKRYAIPPFIGSIEIVLKDIGYILLRTTGRYEFKGLHEIWIPRGIQVGIREPLENLIESGYQRYIETNGKESSCPRDRPIISSLYEMAPDEADTLNAVKKSYLEKTEKDLSARRFVDDDPYDLVQHLEKKKNPYWYYQW.

Residues 1–21 (MLNLCHALRGVRQFSCSVIVK) constitute a mitochondrion transit peptide. The CP-type G domain occupies 113 to 305 (ESTLNDILNY…LFDLPGYSTS (193 aa)).

The protein belongs to the TRAFAC class YlqF/YawG GTPase family. GEP3 subfamily.

It is found in the mitochondrion. Functionally, interacts genetically with prohibitins and thus may be involved in the mitochondrial lipid metabolism. This Saccharomyces cerevisiae (strain YJM789) (Baker's yeast) protein is Genetic interactor of prohibitins 3, mitochondrial (GEP3).